Consider the following 407-residue polypeptide: Protein ZNF365 (407 aa).

Phosphoserine is present on S16. A C2H2-type; degenerate zinc finger spans residues 26 to 51 (LRCPRCGDHTRFRSLSSLRAHLEFSH). At S138 the chain carries Phosphoserine. Residues 169–297 (VEAVDRTIEK…QLEYYQSQQA (129 aa)) adopt a coiled-coil conformation. The residue at position 175 (T175) is a Phosphothreonine. The tract at residues 347 to 392 (LKKAKDDRASMQPAKAIHEQAESSRDLCRPPKKGELLGFGRKGNIR) is disordered. Residues 362–381 (AIHEQAESSRDLCRPPKKGE) show a composition bias toward basic and acidic residues. S369 carries the post-translational modification Phosphoserine.

Homodimer. Interacts with NDE1 and NDEL1. Does not interact with TUBG1. Interacts with DISC1. Interacts with PARP1. Interacts with MCRS1. In terms of tissue distribution, isoform 1 is expressed in brain. Isoform 2 is expressed in placenta and at low level in lung and liver. Isoform 3 is expressed in kidney and pancreas. Isoform 1 is expressed exclusively in brain.

It localises to the cytoplasm. It is found in the cytoskeleton. The protein resides in the microtubule organizing center. Its subcellular location is the centrosome. Its function is as follows. Involved in the regulation of neurogenesis. Negatively regulates neurite outgrowth. Involved in the morphogenesis of basket cells in the somatosensory cortex during embryogenesis. Involved in the positive regulation of oligodendrocyte differentiation during postnatal growth. Involved in dendritic arborization, morphogenesis of spine density dendrite, and establishment of postsynaptic dendrite density in cortical pyramidal neurons. Involved in homologous recombination (HR) repair pathway. Required for proper resolution of DNA double-strand breaks (DSBs) by HR. Is required for recovery of stalled replication forks, and directly contributes to genomic stability. Interacts with PARP1 and mediates MRE11-dependent DNA end resection during replication fork recovery. Contributes to genomic stability by preventing telomere dysfunction. In Homo sapiens (Human), this protein is Protein ZNF365 (ZNF365).